The chain runs to 146 residues: Hemoglobin subunit beta (146 aa).

At V1 the chain carries N-acetylvaline. One can recognise a Globin domain in the interval 2 to 146 (HLTGEEKSAV…VANALAHKYH (145 aa)). Phosphothreonine is present on T12. S44 carries the post-translational modification Phosphoserine. N6-acetyllysine is present on K59. H63 provides a ligand contact to heme b. An N6-acetyllysine modification is found at K82. H92 lines the heme b pocket. C93 carries the S-nitrosocysteine modification. K144 is subject to N6-acetyllysine.

It belongs to the globin family. As to quaternary structure, heterotetramer of two alpha chains and two beta chains. As to expression, red blood cells.

Functionally, involved in oxygen transport from the lung to the various peripheral tissues. The polypeptide is Hemoglobin subunit beta (HBB) (Mico argentatus (Silvery marmoset)).